A 283-amino-acid chain; its full sequence is Nucleotide-binding protein Hore_15880 (283 aa).

Position 8 to 15 (8 to 15) interacts with ATP; that stretch reads GMSGAGKS. 57-60 serves as a coordination point for GTP; sequence DIRG.

The protein belongs to the RapZ-like family.

Functionally, displays ATPase and GTPase activities. The chain is Nucleotide-binding protein Hore_15880 from Halothermothrix orenii (strain H 168 / OCM 544 / DSM 9562).